Here is a 55-residue protein sequence, read N- to C-terminus: UPF0391 membrane protein Sfum_0248 (55 aa).

Helical transmembrane passes span 4 to 24 (WALIFLAVAIAAGVLGFGGII) and 28 to 48 (AWIAQVLFILFLVFFLVSLLS).

Belongs to the UPF0391 family.

It is found in the cell membrane. The polypeptide is UPF0391 membrane protein Sfum_0248 (Syntrophobacter fumaroxidans (strain DSM 10017 / MPOB)).